We begin with the raw amino-acid sequence, 217 residues long: Grancalcin (217 aa).

EF-hand domains follow at residues 48–83 (SSAG…SGIN), 89–122 (FSLE…AALN), 119–154 (AALN…MGYR), and 155–180 (LSPQ…DYVA). Positions 65, 69, and 71 each coordinate Ca(2+). Ca(2+) is bound by residues aspartate 132, aspartate 134, serine 136, threonine 138, and glutamate 143.

In terms of assembly, homodimer. Interacts with SRI and LCP1. Detected in neutrophils and macrophages (at protein level). Highly expressed in bone marrow.

It is found in the cytoplasm. The protein resides in the cytoplasmic granule membrane. Calcium-binding protein that may play a role in the adhesion of neutrophils to fibronectin. May play a role in the formation of focal adhesions. This chain is Grancalcin (GCA), found in Homo sapiens (Human).